The sequence spans 100 residues: Class II hydrophobin FOXG_02746 (100 aa).

Residues 1–17 (MQFYTIVSLFLAGTAYA) form the signal peptide. Intrachain disulfides connect cysteine 29-cysteine 79, cysteine 40-cysteine 70, cysteine 41-cysteine 53, and cysteine 80-cysteine 92.

This sequence belongs to the cerato-ulmin hydrophobin family. Homodimer. Homodimers further self-assemble to form highly ordered films at water-air interfaces through intermolecular interactions.

The protein resides in the secreted. It localises to the cell wall. Aerial growth, conidiation, and dispersal of filamentous fungi in the environment rely upon a capability of their secreting small amphipathic proteins called hydrophobins (HPBs) with low sequence identity. Class I can self-assemble into an outermost layer of rodlet bundles on aerial cell surfaces, conferring cellular hydrophobicity that supports fungal growth, development and dispersal; whereas Class II form highly ordered films at water-air interfaces through intermolecular interactions but contribute nothing to the rodlet structure. FOXG_02746 is a class II hydrophobin that is likely required for plant colonization. This chain is Class II hydrophobin FOXG_02746, found in Fusarium oxysporum f. sp. lycopersici (strain 4287 / CBS 123668 / FGSC 9935 / NRRL 34936) (Fusarium vascular wilt of tomato).